Here is a 924-residue protein sequence, read N- to C-terminus: Cell division control protein 13 (924 aa).

A disordered region spans residues 265–336 (PTTDISNMGE…KRKRKLSFHS (72 aa)). The span at 295 to 308 (GKYFSSKSYIQSQT) shows a compositional bias: polar residues. A Phosphoserine modification is found at Ser306. At Thr308 the chain carries Phosphothreonine. Basic and acidic residues predominate over residues 309 to 326 (PERKTSVPNNWHDDDSGS). The residue at position 333 (Ser333) is a Phosphoserine. Positions 500 to 686 (KMARKDPTIE…FEEYRRFFPI (187 aa)) form a DNA-binding region, OB.

In terms of assembly, interacts with POL1, EST1, FUN12, STM1, STN1 and TEN1.

The protein localises to the chromosome. It is found in the telomere. Functionally, single-stranded telomeric DNA-binding protein that regulates telomere replication. Has a role in both positive and negative regulation. Promotes [TG(1-3)] strand lengthening via interaction with EST1. Promotes [C(1-3)A] strand re-synthesis by DNA polymerase alpha via interaction with POL1. Negatively regulates telomere elongation of the G strand via binding with STN1 thereby inhibiting telomerase activity. The sequence is that of Cell division control protein 13 (CDC13) from Saccharomyces cerevisiae (strain ATCC 204508 / S288c) (Baker's yeast).